The primary structure comprises 193 residues: dCTP deaminase (193 aa).

Residues Arg110–Arg115, Asp128, Val136–Glu138, Tyr171, Lys178, and Gln182 contribute to the dCTP site. The active-site Proton donor/acceptor is the Glu138. A disordered region spans residues Lys173–Asp193.

The protein belongs to the dCTP deaminase family. Homotrimer.

It carries out the reaction dCTP + H2O + H(+) = dUTP + NH4(+). It functions in the pathway pyrimidine metabolism; dUMP biosynthesis; dUMP from dCTP (dUTP route): step 1/2. Its function is as follows. Catalyzes the deamination of dCTP to dUTP. The chain is dCTP deaminase from Shewanella sp. (strain ANA-3).